Reading from the N-terminus, the 510-residue chain is Maturase K (510 aa).

The protein belongs to the intron maturase 2 family. MatK subfamily.

Its subcellular location is the plastid. It localises to the chloroplast. Functionally, usually encoded in the trnK tRNA gene intron. Probably assists in splicing its own and other chloroplast group II introns. The protein is Maturase K of Populus nigra (Lombardy poplar).